The primary structure comprises 241 residues: Probable WRKY transcription factor 63 (241 aa).

The tract at residues 56–79 (NSPNRQPHHESSSRDMAGLVPQRS) is disordered. Positions 97-165 (SPNPRLDDGF…YLGQHTCKAF (69 aa)) form a DNA-binding region, WRKY.

This sequence belongs to the WRKY group III family.

It localises to the nucleus. Transcription factor. Interacts specifically with the W box (5'-(T)TGAC[CT]-3'), a frequently occurring elicitor-responsive cis-acting element. In Arabidopsis thaliana (Mouse-ear cress), this protein is Probable WRKY transcription factor 63 (WRKY63).